A 344-amino-acid polypeptide reads, in one-letter code: KRR1 small subunit processome component homolog (344 aa).

The KH domain occupies 125-193 (DIIKIGNLVH…VRDIVLETMN (69 aa)). Residues 232-245 (NISKRKQPKVKKQK) are compositionally biased toward basic residues. Disordered stretches follow at residues 232–260 (NISK…ESKV) and 273–326 (QEQK…TKVD). Residues 270-295 (FLNQEQKQAKRNQGRTEKQKEAAKRQ) are a coiled coil. Composition is skewed to basic and acidic residues over residues 283–302 (GRTE…RNKD) and 315–326 (RKKEDGSSTKVD).

It belongs to the KRR1 family. As to quaternary structure, monomer. Component of the ribosomal small subunit (SSU) processome.

It localises to the nucleus. Its subcellular location is the nucleolus. In terms of biological role, required for 40S ribosome biogenesis. Involved in nucleolar processing of pre-18S ribosomal RNA and ribosome assembly. Binds to RNA. Required for female germline development, cell viability during eye development and for survival of dividing cells and epithelial cells during early wing disk development. In Drosophila yakuba (Fruit fly), this protein is KRR1 small subunit processome component homolog.